The sequence spans 296 residues: Antisense-enhancing sequence 1 (296 aa).

Residue glutamate 47 is part of the active site.

Belongs to the PhzF family.

In terms of biological role, may have isomerase activity. Enhances target gene silencing when coexpressed with antisense RNA. The protein is Antisense-enhancing sequence 1 (aes1) of Schizosaccharomyces pombe (strain 972 / ATCC 24843) (Fission yeast).